The primary structure comprises 417 residues: Fatty-acid peroxygenase (417 aa).

Cysteine 363 contributes to the heme binding site.

It belongs to the cytochrome P450 family. Heme serves as cofactor.

The catalysed reaction is a 1,2-saturated fatty acid + H2O2 = a 2-hydroxy fatty acid + H2O. It catalyses the reaction a 2,3-saturated fatty acid + H2O2 = a 3-hydroxy fatty acid + H2O. It carries out the reaction tetradecanoate + H2O2 = (3R)-hydroxytetradecanoate + H2O. The enzyme catalyses tetradecanoate + H2O2 = (2R)-hydroxytetradecanoate + H2O. The catalysed reaction is tetradecanoate + H2O2 = (2S)-hydroxytetradecanoate + H2O. Catalyzes the alpha- and beta-hydroxylation of myristic acid in the presence of hydrogen peroxide. The protein is Fatty-acid peroxygenase (cypC) of Bacillus subtilis (strain 168).